The primary structure comprises 1710 residues: Centrosomal protein of 152 kDa (1710 aa).

Disordered stretches follow at residues 1–27 (MSLD…YERE), 39–79 (HDML…NEQM), and 108–139 (NRSK…SKCE). Positions 1-60 (MSLDFGSVALPVQNEDEEYDEEDYEREKELQQLLTDLPHDMLDDDLSSPELQYSDCSEDG) are interaction with PLK4. Residues 14 to 24 (NEDEEYDEEDY) show a composition bias toward acidic residues. The span at 108–123 (NRSKTEDRHPVYHPEE) shows a compositional bias: basic and acidic residues. A coiled-coil region spans residues 234–490 (ENMQIIQLQV…ISLYESAAKL (257 aa)). Positions 587 to 604 (DEKSIEVETKTDTSEKPK) are enriched in basic and acidic residues. Positions 587–611 (DEKSIEVETKTDTSEKPKNQLWPES) are disordered. Coiled coils occupy residues 615 to 664 (DVVR…QDFD), 700 to 772 (EKQQ…LEKE), and 902 to 993 (AVSE…INEV). The disordered stretch occupies residues 1120–1142 (ELSKDSASQGTGQGDPGPAAGHH). Residues 1170-1241 (HCFQELEKAK…LEELQTLCKT (72 aa)) are a coiled coil. Phosphothreonine is present on Thr1241.

Belongs to the CEP152 family. In terms of assembly, interacts (via N-terminus) with PLK4; the interaction is mutally exclusive with a PLK4:CEP192 interaction. Interacts (via C-terminus) with CPAP (via-N-terminus). Interacts with CINP. Interacts with CDK5RAP2, WDR62, CEP63 and CEP131. CEP63, CDK5RAP2, CEP152, WDR62 are proposed to form a stepwise assembled complex at the centrosome forming a ring near parental centrioles. Interacts with DEUP1; this interaction recruits CEP152 to the deuterosome. The interactions with CEP63 and DEUP1 are mutually exclusive. Interacts with CCDC66.

It localises to the cytoplasm. The protein localises to the cytoskeleton. The protein resides in the microtubule organizing center. It is found in the centrosome. Its subcellular location is the centriole. In terms of biological role, necessary for centrosome duplication; the function also seems to involve CEP63, CDK5RAP2 and WDR62 through a stepwise assembled complex at the centrosome that recruits CDK2 required for centriole duplication. Acts as a molecular scaffold facilitating the interaction of PLK4 and CPAP, 2 molecules involved in centriole formation. Proposed to snatch PLK4 away from PLK4:CEP92 complexes in early G1 daughter centriole and to reposition PLK4 at the outer boundary of a newly forming CEP152 ring structure. Also plays a key role in deuterosome-mediated centriole amplification in multiciliated that can generate more than 100 centrioles. Overexpression of CEP152 can drive amplification of centrioles. The polypeptide is Centrosomal protein of 152 kDa (Homo sapiens (Human)).